Here is an 865-residue protein sequence, read N- to C-terminus: Alanine--tRNA ligase (865 aa).

Zn(2+)-binding residues include histidine 554, histidine 558, cysteine 656, and histidine 660.

It belongs to the class-II aminoacyl-tRNA synthetase family. Requires Zn(2+) as cofactor.

It is found in the cytoplasm. It carries out the reaction tRNA(Ala) + L-alanine + ATP = L-alanyl-tRNA(Ala) + AMP + diphosphate. Catalyzes the attachment of alanine to tRNA(Ala) in a two-step reaction: alanine is first activated by ATP to form Ala-AMP and then transferred to the acceptor end of tRNA(Ala). Also edits incorrectly charged Ser-tRNA(Ala) and Gly-tRNA(Ala) via its editing domain. The protein is Alanine--tRNA ligase of Francisella tularensis subsp. mediasiatica (strain FSC147).